A 614-amino-acid chain; its full sequence is Spastin (614 aa).

The tract at residues 1–45 is disordered; that stretch reads MNSPGGRGKKKGSGGPSSPVPPRPPPPCQARSRPAPKPAPPPQSP. The segment at 1–50 is required for nuclear localization; sequence MNSPGGRGKKKGSGGPSSPVPPRPPPPCQARSRPAPKPAPPPQSPHKRNL. Over 1–56 the chain is Cytoplasmic; sequence MNSPGGRGKKKGSGGPSSPVPPRPPPPCQARSRPAPKPAPPPQSPHKRNLYYFSYP. The required for interaction with ATL1 stretch occupies residues 1-80; sequence MNSPGGRGKK…LGLLFVWLCQ (80 aa). A required for midbody localization region spans residues 1–192; sequence MNSPGGRGKK…LVMAKDRLQL (192 aa). Residues 1–298 are required for interaction with RTN1; the sequence is MNSPGGRGKK…STPKTNRTNK (298 aa). The short motif at 4-11 is the Nuclear localization signal element; the sequence is PGGRGKKK. Pro residues-rich tracts occupy residues 18-28 and 35-44; these read SPVPPRPPPPC and APKPAPPPQS. Positions 50-87 are required for interaction with SSNA1 and microtubules; sequence LYYFSYPLFLGFALLRLVAFHLGLLFVWLCQRFSRALM. The segment at residues 57–77 is an intramembrane region (helical); the sequence is LFLGFALLRLVAFHLGLLFVW. Residues 59 to 67 carry the Nuclear export signal motif; that stretch reads LGFALLRLV. The Cytoplasmic portion of the chain corresponds to 78–614; that stretch reads LCQRFSRALM…WNKDFGDTTV (537 aa). The segment at 110–194 is sufficient for interaction with CHMP1B; sequence EAERVRAFHK…MAKDRLQLLE (85 aa). Residues 112 to 198 are required for interaction with microtubules; sequence ERVRAFHKQA…RLQLLEKLQP (87 aa). One can recognise an MIT domain in the interval 118-193; sequence HKQAFEYISV…VMAKDRLQLL (76 aa). Positions 220–310 are disordered; that stretch reads NGHLQSESGA…TPTTAARKKK (91 aa). Positions 226 to 614 are sufficient for microtubule severing; sequence ESGAVPKRKD…WNKDFGDTTV (389 aa). S243 and S266 each carry phosphoserine. Residues 268-326 form a required for interaction with microtubules and microtubule severing region; it reads SGLSMVSGVRQGPGSAAATHKSTPKTNRTNKPSTPTTAARKKKDLKNFRNVDSNLANLI. The span at 287-304 shows a compositional bias: polar residues; that stretch reads HKSTPKTNRTNKPSTPTT. T304 carries the phosphothreonine modification. Positions 307–310 match the Nuclear localization signal motif; it reads RKKK. 380 to 387 contributes to the ATP binding site; the sequence is GPPGNGKT. A Phosphoserine modification is found at S595.

This sequence belongs to the AAA ATPase family. Spastin subfamily. Homohexamer. Mostly monomeric, but assembles into hexameric structure for short periods of time. Oligomerization seems to be a prerequisite for catalytic activity. Binding to ATP in a cleft between two adjacent subunits stabilizes the homohexameric form. Binds to microtubules at least in part via the alpha-tubulin and beta-tubulin tails. The hexamer adopts a ring conformation through which microtubules pass prior to being severed. Does not interact strongly with tubulin heterodimers. Interacts (via MIT domain) with CHMP1B; the interaction is direct. Interacts with SSNA1. Interacts with ATL1. Interacts with RTN1. Interacts with ZFYVE27. Interacts with REEP1. Interacts (via MIT domain) with IST1.

The protein localises to the membrane. It is found in the endoplasmic reticulum. It localises to the midbody. Its subcellular location is the cytoplasm. The protein resides in the cytoskeleton. The protein localises to the microtubule organizing center. It is found in the centrosome. It localises to the perinuclear region. Its subcellular location is the nucleus. The protein resides in the spindle. The protein localises to the cell projection. It is found in the axon. It catalyses the reaction n ATP + n H2O + a microtubule = n ADP + n phosphate + (n+1) alpha/beta tubulin heterodimers.. With respect to regulation, allosteric enzyme with a cooperative mechanism; at least two neighbor subunits influence each other strongly in spastin hexamers. Microtubule binding promotes cooperative interactions among spastin subunits. ATP-dependent microtubule severing protein that specifically recognizes and cuts microtubules that are polyglutamylated. Preferentially recognizes and acts on microtubules decorated with short polyglutamate tails: severing activity increases as the number of glutamates per tubulin rises from one to eight, but decreases beyond this glutamylation threshold. Severing activity is not dependent on tubulin acetylation or detyrosination. Microtubule severing promotes reorganization of cellular microtubule arrays and the release of microtubules from the centrosome following nucleation. It is critical for the biogenesis and maintenance of complex microtubule arrays in axons, spindles and cilia. SPAST is involved in abscission step of cytokinesis and nuclear envelope reassembly during anaphase in cooperation with the ESCRT-III complex. Recruited at the midbody, probably by IST1, and participates in membrane fission during abscission together with the ESCRT-III complex. Recruited to the nuclear membrane by IST1 and mediates microtubule severing, promoting nuclear envelope sealing and mitotic spindle disassembly during late anaphase. Required for membrane traffic from the endoplasmic reticulum (ER) to the Golgi and endosome recycling. Recruited by IST1 to endosomes and regulates early endosomal tubulation and recycling by mediating microtubule severing. Probably plays a role in axon growth and the formation of axonal branches. The protein is Spastin of Bos taurus (Bovine).